A 444-amino-acid chain; its full sequence is Adenine permease AdeQ (444 aa).

Topologically, residues methionine 1–valine 29 are cytoplasmic. Residues arginine 30–isoleucine 53 traverse the membrane as a helical segment. Topologically, residues leucine 54–valine 63 are periplasmic. The chain crosses the membrane as a helical span at residues valine 64–phenylalanine 82. Topologically, residues alanine 83–asparagine 84 are cytoplasmic. A discontinuously helical transmembrane segment spans residues leucine 85–phenylalanine 101. The Periplasmic segment spans residues valine 102 to threonine 113. Residues glycine 114–isoleucine 133 traverse the membrane as a helical segment. Residues arginine 134–leucine 145 lie on the Cytoplasmic side of the membrane. A helical membrane pass occupies residues arginine 146 to glycine 166. The Periplasmic segment spans residues valine 167–serine 182. Residues serine 183–serine 200 form a helical membrane-spanning segment. Residues serine 201 to phenylalanine 204 lie on the Cytoplasmic side of the membrane. Residues histidine 205–glycine 223 form a helical membrane-spanning segment. The Periplasmic portion of the chain corresponds to aspartate 224–threonine 251. A helical membrane pass occupies residues leucine 252–alanine 280. Residues glycine 281–asparagine 293 are Cytoplasmic-facing. Residues lysine 294–isoleucine 309 traverse the membrane as a helical segment. Residues glycine 310–threonine 311 lie on the Periplasmic side of the membrane. The discontinuously helical transmembrane segment at serine 312 to glycine 327 threads the bilayer. Over glycine 328–glycine 331 the chain is Cytoplasmic. A helical transmembrane segment spans residues leucine 332–phenylalanine 346. Residues phenylalanine 347–tyrosine 357 lie on the Periplasmic side of the membrane. Residues alanine 358 to valine 377 traverse the membrane as a helical segment. Residues asparagine 378–phenylalanine 382 lie on the Cytoplasmic side of the membrane. An intramembrane region (discontinuously helical) is located at residues threonine 383–cysteine 418. The Cytoplasmic portion of the chain corresponds to threonine 419–aspartate 444.

Belongs to the nucleobase:cation symporter-2 (NCS2) (TC 2.A.40) family. Azg-like subfamily.

It is found in the cell inner membrane. In terms of biological role, high-affinity transporter for adenine. In Escherichia coli (strain K12), this protein is Adenine permease AdeQ (adeQ).